The chain runs to 303 residues: Guanosine-inosine kinase (303 aa).

Belongs to the carbohydrate kinase PfkB family. As to quaternary structure, homodimer. The cofactor is Mg(2+).

It catalyses the reaction guanosine + ATP = GMP + ADP + H(+). The catalysed reaction is inosine + ATP = IMP + ADP + H(+). It functions in the pathway purine metabolism; IMP biosynthesis via salvage pathway; IMP from inosine: step 1/1. Its pathway is purine metabolism; GMP biosynthesis via salvage pathway. Its activity is regulated as follows. Kinase activity is stimulated by pyrimidine nucleotides, especially CMP and CTP, and inhibited by AMP, ADP and GMP. Activity is stimulated by potassium or ammonium ions. In terms of biological role, catalyzes the phosphorylation of guanosine and inosine to GMP and IMP, respectively. Can also use deoxyguanosine. Shows a strong preference for guanosine. dATP, GTP and dGTP can serve as phosphate donors. The chain is Guanosine-inosine kinase from Exiguobacterium acetylicum (Brevibacterium acetylicum).